We begin with the raw amino-acid sequence, 498 residues long: uncharacterized protein (498 aa).

Residue 329 to 336 (GNPGTGKS) participates in ATP binding.

The protein resides in the secreted. It is found in the cell wall. This is an uncharacterized protein from Mycobacterium tuberculosis (strain CDC 1551 / Oshkosh).